Here is a 354-residue protein sequence, read N- to C-terminus: Peptide chain release factor 1 (354 aa).

Gln-230 carries the N5-methylglutamine modification. Positions 282–301 (KQASDAIKKQMIGSGDRSER) are disordered.

This sequence belongs to the prokaryotic/mitochondrial release factor family. Post-translationally, methylated by PrmC. Methylation increases the termination efficiency of RF1.

The protein localises to the cytoplasm. Functionally, peptide chain release factor 1 directs the termination of translation in response to the peptide chain termination codons UAG and UAA. The chain is Peptide chain release factor 1 from Leptospira borgpetersenii serovar Hardjo-bovis (strain L550).